We begin with the raw amino-acid sequence, 281 residues long: MTTTRAKSKFQSLSACRFTPLPEPNTSPSTYSKTLPKPNSSPGTDGTFPTPFPLAVITPIKTLKSVTLSDWWLTKKGKDLCIKGFESNGASGVRLFSSGTISKRHESTTLEAIDGITISINGFINRSRCLENGISIEVCNRFRLGFPYDWEDYNEEEEEKKKKNVDISFDDIPVNRYQDLYSLEGCLKDKILDDVVGSLRDLVCQKSDKACEKSRVGDVDDDDDDDDDKSLVSRVVGVKTRGMLRRREEYEASIGKRVATMSGKRVVTVSKKKNRRRSFGW.

2 stretches are compositionally biased toward polar residues: residues 1-14 (MTTT…QSLS) and 24-41 (PNTS…PNSS). The interval 1–47 (MTTTRAKSKFQSLSACRFTPLPEPNTSPSTYSKTLPKPNSSPGTDGT) is disordered. Residues 66–153 (VTLSDWWLTK…LGFPYDWEDY (88 aa)) enclose the SANTA domain.

Its function is as follows. Required for normal embryo development. The protein is Protein EMBRYO DEFECTIVE 1674 of Arabidopsis thaliana (Mouse-ear cress).